A 402-amino-acid polypeptide reads, in one-letter code: Serine/threonine transporter SstT (402 aa).

A run of 8 helical transmembrane segments spans residues 17-37, 44-64, 78-98, 138-158, 179-199, 212-232, 295-315, and 336-356; these read IAIG…ITVI, FVGG…ANAL, IIVL…ISHY, ALSQ…GFAM, IVRW…FDTI, VLIL…NPII, MAGA…TLGI, and ASGI…LFGI.

This sequence belongs to the dicarboxylate/amino acid:cation symporter (DAACS) (TC 2.A.23) family.

The protein resides in the cell membrane. It catalyses the reaction L-serine(in) + Na(+)(in) = L-serine(out) + Na(+)(out). It carries out the reaction L-threonine(in) + Na(+)(in) = L-threonine(out) + Na(+)(out). Functionally, involved in the import of serine and threonine into the cell, with the concomitant import of sodium (symport system). This is Serine/threonine transporter SstT from Streptococcus thermophilus (strain ATCC BAA-250 / LMG 18311).